The following is a 113-amino-acid chain: Dynein light chain Tctex-type 1 (113 aa).

Methionine 1 is modified (N-acetylmethionine). Residues glutamine 41–isoleucine 113 form an interaction with GNB1 region.

Belongs to the dynein light chain Tctex-type family. Homodimer. The cytoplasmic dynein 1 complex consists of two catalytic heavy chains (HCs) and a number of non-catalytic subunits presented by intermediate chains (ICs), light intermediate chains (LICs) and light chains (LCs); the composition seems to vary in respect to the IC, LIC and LC composition. The heavy chain homodimer serves as a scaffold for the probable homodimeric assembly of the respective non-catalytic subunits. The ICs and LICs bind directly to the HC dimer and the LCs assemble on the IC dimer. DYNLT1 and DYNLT3 compete for association with dynein IC (DYNC1I1 or DYNC1I2). Self-associates. Interacts with RHO. Interacts with DYNC1I1 and DYNC1I2. Interacts with DOC2A, DOC2B and SCN10A. Interacts with PVR. Interacts with SVIL isoform 2. Interacts with GNB1; the interaction occurs in presence of guanine nucleotide-binding protein G(T) subunit gamma; the interaction diminishes the association of DYNLT1 with dynein IC (DYNC1I1 or DYNC1I2). Interacts with GNB2, GNB3 and GNB5; the interactions occur in presence of guanine nucleotide-binding protein G(T) subunit gamma. Interacts with ACVR2B and ARHGEF2. Interacts with DNAI4. Interacts with CFAP61. Phosphorylated by BMPR2. The phosphorylation status is proposed to regulate the association with the cytoplasmic dynein complex and may have role in cytoplasmic dynein cargo release. As to expression, high level in testis (germ cell-specific). Expressed in sperm (at protein level). 200-fold lower in liver, brain, heart, spleen, and kidney. Levels in thymus and two embryonal carcinoma cell lines were several-fold higher than this low constitutive level.

Its subcellular location is the golgi apparatus. The protein localises to the cytoplasm. It localises to the cytoskeleton. It is found in the spindle. Its function is as follows. Acts as one of several non-catalytic accessory components of the cytoplasmic dynein 1 complex that are thought to be involved in linking dynein to cargos and to adapter proteins that regulate dynein function. Cytoplasmic dynein 1 acts as a motor for the intracellular retrograde motility of vesicles and organelles along microtubules. Binds to transport cargos and is involved in apical cargo transport such as rhodopsin-bearing vesicles in polarized epithelia. May also be a accessory component of axonemal dynein. Plays an important role in male germ cell development and function. Candidate for involvement in male sterility. Functionally, plays a role in neuronal morphogenesis; the function is independent of cytoplasmic dynein and seems to be coupled to regulation of the actin cytoskeleton by enhancing Rac1 activity. The function in neurogenesis may be regulated by association with a G-protein beta-gamma dimer. May function as a receptor-independent activator of heterotrimeric G-protein signaling; the activation appears to be independent of a nucleotide exchange. Plays a role in regulating neurogenesis; inhibits the genesis of neurons from precursor cells during cortical development presumably by antagonizing ARHGEF2. Unrelated to the role in retrograde microtubule-associated movement may play a role in the dimerization of cytoplasmic proteins/domains such as for ACVR2B. Binds to the cytoplasmic domain of ACVR2B and, in vitro, inhibits ACVR2B signaling. Involved in the regulation of mitotic spindle orientation. The sequence is that of Dynein light chain Tctex-type 1 (Dynlt1) from Mus musculus (Mouse).